The following is a 123-amino-acid chain: MLQQESRVRVADNSGAREILVIRVLGGSVKRSAGIGDVVVATVKEAAPGGTVKENEIVRAVIVRTKKPTRRPDGSYIAFDENAAVIIKANDNDPRGTRIFGPVARELREKKFMKIVSLAPEVL.

Belongs to the universal ribosomal protein uL14 family. Part of the 50S ribosomal subunit. Forms a cluster with proteins L3 and L19. In the 70S ribosome, L14 and L19 interact and together make contacts with the 16S rRNA in bridges B5 and B8.

Functionally, binds to 23S rRNA. Forms part of two intersubunit bridges in the 70S ribosome. The protein is Large ribosomal subunit protein uL14 of Corynebacterium urealyticum (strain ATCC 43042 / DSM 7109).